We begin with the raw amino-acid sequence, 766 residues long: Sucrose synthase (766 aa).

Residues Met-220 to Thr-698 form a GT-B glycosyltransferase region.

Belongs to the glycosyltransferase 1 family. Plant sucrose synthase subfamily. In terms of tissue distribution, expressed most predominantly in tap root.

It catalyses the reaction an NDP-alpha-D-glucose + D-fructose = a ribonucleoside 5'-diphosphate + sucrose + H(+). In terms of biological role, sucrose-cleaving enzyme that provides UDP-glucose and fructose for various metabolic pathways. The sequence is that of Sucrose synthase (SS1) from Beta vulgaris (Sugar beet).